Reading from the N-terminus, the 312-residue chain is Protein-glutamate methylesterase/protein-glutamine glutaminase (312 aa).

Residues 5-122 (RVLSVDDSAL…REGMLAYSEM (118 aa)) form the Response regulatory domain. The residue at position 56 (D56) is a 4-aspartylphosphate. The 156-residue stretch at 152 to 307 (LLSSEKLIAI…QQMLAKISAG (156 aa)) folds into the CheB-type methylesterase domain. Active-site residues include S164, H190, and D249.

This sequence belongs to the CheB family. Phosphorylated by CheA. Phosphorylation of the N-terminal regulatory domain activates the methylesterase activity.

The protein localises to the cytoplasm. The enzyme catalyses [protein]-L-glutamate 5-O-methyl ester + H2O = L-glutamyl-[protein] + methanol + H(+). It carries out the reaction L-glutaminyl-[protein] + H2O = L-glutamyl-[protein] + NH4(+). Functionally, involved in chemotaxis. Part of a chemotaxis signal transduction system that modulates chemotaxis in response to various stimuli. Catalyzes the demethylation of specific methylglutamate residues introduced into the chemoreceptors (methyl-accepting chemotaxis proteins or MCP) by CheR. Also mediates the irreversible deamidation of specific glutamine residues to glutamic acid. The sequence is that of Protein-glutamate methylesterase/protein-glutamine glutaminase from Shigella boydii serotype 4 (strain Sb227).